The chain runs to 754 residues: tRNA(Met) cytidine acetyltransferase TmcA (754 aa).

A disordered region spans residues 181-202 (GISFDAAPPRVPTEKDRRSPRR). A compositionally biased stretch (basic and acidic residues) spans 192-202 (PTEKDRRSPRR). ATP is bound by residues glutamine 212, 236-245 (GRGKSSAAGL), and arginine 383. Residues 418 to 603 (VSYRALSPDD…YSALMTRPLS (186 aa)) form the N-acetyltransferase domain. Acetyl-CoA is bound by residues 529–531 (IAT), 536–542 (RSSGLGS), and glutamate 568.

It belongs to the RNA cytidine acetyltransferase family. TmcA subfamily.

It localises to the cytoplasm. It catalyses the reaction cytidine(34) in elongator tRNA(Met) + acetyl-CoA + ATP + H2O = N(4)-acetylcytidine(34) in elongator tRNA(Met) + ADP + phosphate + CoA + H(+). Catalyzes the formation of N(4)-acetylcytidine (ac(4)C) at the wobble position of tRNA(Met), by using acetyl-CoA as an acetyl donor and ATP (or GTP). The protein is tRNA(Met) cytidine acetyltransferase TmcA of Haloferax volcanii (strain ATCC 29605 / DSM 3757 / JCM 8879 / NBRC 14742 / NCIMB 2012 / VKM B-1768 / DS2) (Halobacterium volcanii).